The primary structure comprises 124 residues: MPTIQQLIRTERKTLKTKTKSPALRGCPERRGVCTRVYTSTPKKPNSALRKVARVRLTSGFEVTAYIGGIGHNLQEHSVVLLRGGRVKDLPGVRYHIVRGTLDTAGVKDRRQSRSKYGAKSPKE.

Aspartate 89 carries the post-translational modification 3-methylthioaspartic acid. Positions 103 to 124 (DTAGVKDRRQSRSKYGAKSPKE) are disordered.

Belongs to the universal ribosomal protein uS12 family. As to quaternary structure, part of the 30S ribosomal subunit. Contacts proteins S8 and S17. May interact with IF1 in the 30S initiation complex.

Its function is as follows. With S4 and S5 plays an important role in translational accuracy. Functionally, interacts with and stabilizes bases of the 16S rRNA that are involved in tRNA selection in the A site and with the mRNA backbone. Located at the interface of the 30S and 50S subunits, it traverses the body of the 30S subunit contacting proteins on the other side and probably holding the rRNA structure together. The combined cluster of proteins S8, S12 and S17 appears to hold together the shoulder and platform of the 30S subunit. The protein is Small ribosomal subunit protein uS12 of Prochlorococcus marinus (strain NATL1A).